Consider the following 199-residue polypeptide: Charged multivesicular body protein 1b (199 aa).

Coiled-coil stretches lie at residues 8 to 42 (LFNL…AIQK) and 178 to 199 (TSVA…RDQV). Positions 167-199 (ELPQGQTGSVGTSVASTEQDELSQRLARLRDQV) are disordered. A compositionally biased stretch (polar residues) spans 170–183 (QGQTGSVGTSVAST). The short motif at 186–196 (DELSQRLARLR) is the MIT-interacting motif element.

Belongs to the SNF7 family. Probable peripherally associated component of the endosomal sorting required for transport complex III (ESCRT-III).

Its subcellular location is the cytoplasm. The protein localises to the cytosol. The protein resides in the endosome. It localises to the late endosome membrane. Probable peripherally associated component of the endosomal sorting required for transport complex III (ESCRT-III) which is involved in multivesicular bodies (MVBs) formation and sorting of endosomal cargo proteins into MVBs. MVBs contain intraluminal vesicles (ILVs) that are generated by invagination and scission from the limiting membrane of the endosome and mostly are delivered to lysosomes enabling degradation of membrane proteins, such as stimulated growth factor receptors, lysosomal enzymes and lipids. The chain is Charged multivesicular body protein 1b (chmp1b) from Xenopus laevis (African clawed frog).